Here is a 900-residue protein sequence, read N- to C-terminus: Protein translocase subunit SecA (900 aa).

Residues glutamine 87, 105-109 (GEGKT), and aspartate 512 contribute to the ATP site. Basic and acidic residues predominate over residues 842 to 852 (QQRREEAERLA). Positions 842–900 (QQRREEAERLARQQQLSHQEEDSLNTGSPAQADRKIGRNDPCPCGSGKKYKQCHGRLQK) are disordered. Zn(2+)-binding residues include cysteine 883, cysteine 885, cysteine 894, and histidine 895. Over residues 889–900 (KKYKQCHGRLQK) the composition is skewed to basic residues.

Belongs to the SecA family. In terms of assembly, monomer and homodimer. Part of the essential Sec protein translocation apparatus which comprises SecA, SecYEG and auxiliary proteins SecDF-YajC and YidC. It depends on Zn(2+) as a cofactor.

It is found in the cell inner membrane. The protein localises to the cytoplasm. It carries out the reaction ATP + H2O + cellular proteinSide 1 = ADP + phosphate + cellular proteinSide 2.. Part of the Sec protein translocase complex. Interacts with the SecYEG preprotein conducting channel. Has a central role in coupling the hydrolysis of ATP to the transfer of proteins into and across the cell membrane, serving both as a receptor for the preprotein-SecB complex and as an ATP-driven molecular motor driving the stepwise translocation of polypeptide chains across the membrane. The chain is Protein translocase subunit SecA from Pectobacterium carotovorum subsp. carotovorum (strain PC1).